Reading from the N-terminus, the 99-residue chain is Large ribosomal subunit protein eL42 (99 aa).

This sequence belongs to the eukaryotic ribosomal protein eL42 family.

The chain is Large ribosomal subunit protein eL42 (RPL44) from Chlamydomonas reinhardtii (Chlamydomonas smithii).